We begin with the raw amino-acid sequence, 727 residues long: AN1-type zinc finger protein 4 (727 aa).

The Ubiquitin-like domain maps to 28-103 (MELFIETLTG…LKLVLAMRGG (76 aa)). 2 disordered regions span residues 187–217 (HRMS…IIEN) and 238–264 (KKPK…TAPS). Residues 238–248 (KKPKKAVKIKP) show a composition bias toward basic residues. Residues 661-708 (KKTTNHCFLCGKKTGLASSYECRCGNNFCASHRYAETHGCTYDYKSAG) form an AN1-type zinc finger. Positions 667, 670, 682, 684, 689, 692, 698, and 700 each coordinate Zn(2+).

The protein is AN1-type zinc finger protein 4 (ZFAND4) of Homo sapiens (Human).